The following is a 302-amino-acid chain: MIAANFLLNLFLYPILIKLFRRRRIGQYIRKEGPDLHGYKEGTPTMGGILFVLTGFLFGMISKTNTMVLLGMFLFFLIGFLDDFLSVARKDSTGLKTYQKALLQTLAAFIMLLLIRPDTNVDFFGSTIEMGKWYYLFALLVIVGSSNAMNLTDGLDGLAGWIYVSGSIPYWFFLKERGVSEDILLILGVGVLAFLVFNSKPAKIFMGDTGSITLGGVLGTVSVLTKTEFYLVLFFMIPVIETLSVILQVGSFKIFKRRIFKMSPLHHHFELIGWSEEKIVAVFTVFNLISSLVALEIFGVIG.

10 consecutive transmembrane segments (helical) span residues 1-21 (MIAA…KLFR), 42-62 (GTPT…GMIS), 67-87 (MVLL…FLSV), 95-115 (LKTY…LLLI), 123-143 (FFGS…LVIV), 154-174 (GLDG…WFFL), 178-198 (GVSE…LVFN), 204-224 (IFMG…VSVL), 229-249 (FYLV…ILQV), and 279-299 (IVAV…EIFG).

It belongs to the glycosyltransferase 4 family. MraY subfamily. Requires Mg(2+) as cofactor.

Its subcellular location is the cell inner membrane. The catalysed reaction is UDP-N-acetyl-alpha-D-muramoyl-L-alanyl-gamma-D-glutamyl-meso-2,6-diaminopimeloyl-D-alanyl-D-alanine + di-trans,octa-cis-undecaprenyl phosphate = di-trans,octa-cis-undecaprenyl diphospho-N-acetyl-alpha-D-muramoyl-L-alanyl-D-glutamyl-meso-2,6-diaminopimeloyl-D-alanyl-D-alanine + UMP. The protein operates within cell wall biogenesis; peptidoglycan biosynthesis. Catalyzes the initial step of the lipid cycle reactions in the biosynthesis of the cell wall peptidoglycan: transfers peptidoglycan precursor phospho-MurNAc-pentapeptide from UDP-MurNAc-pentapeptide onto the lipid carrier undecaprenyl phosphate, yielding undecaprenyl-pyrophosphoryl-MurNAc-pentapeptide, known as lipid I. The chain is Phospho-N-acetylmuramoyl-pentapeptide-transferase from Thermotoga maritima (strain ATCC 43589 / DSM 3109 / JCM 10099 / NBRC 100826 / MSB8).